Here is a 144-residue protein sequence, read N- to C-terminus: Cystatin-F (144 aa).

The first 18 residues, 1–18 (MWLAILLALCCLTSDTHG), serve as a signal peptide directing secretion. A glycan (N-linked (GlcNAc...) asparagine) is linked at Asn61. The Secondary area of contact motif lies at 80–84 (QVVKG). 2 cysteine pairs are disulfide-bonded: Cys98-Cys109 and Cys123-Cys143.

It belongs to the cystatin family.

It localises to the secreted. Inhibits papain and cathepsin L but with affinities lower than other cystatins. May play a role in immune regulation through inhibition of a unique target in the hematopoietic system. In Mus musculus (Mouse), this protein is Cystatin-F (Cst7).